Here is a 130-residue protein sequence, read N- to C-terminus: L-ectoine synthase (130 aa).

This sequence belongs to the ectoine synthase family.

It catalyses the reaction (2S)-4-acetamido-2-aminobutanoate = L-ectoine + H2O. The protein operates within amine and polyamine biosynthesis; ectoine biosynthesis; L-ectoine from L-aspartate 4-semialdehyde: step 3/3. Its function is as follows. Catalyzes the circularization of gamma-N-acetyl-alpha,gamma-diaminobutyric acid (ADABA) to ectoine (1,4,5,6-tetrahydro-2-methyl-4-pyrimidine carboxylic acid), which is an excellent osmoprotectant. This is L-ectoine synthase from Mycolicibacterium gilvum (strain PYR-GCK) (Mycobacterium gilvum (strain PYR-GCK)).